The sequence spans 714 residues: Probable metal-nicotianamine transporter YSL5 (714 aa).

The interval 17–44 (HELQETGFSPETEKVKNKNFEEDEEEED) is disordered. Residues 27 to 36 (ETEKVKNKNF) are compositionally biased toward basic and acidic residues. 13 helical membrane-spanning segments follow: residues 67-87 (AFVVSFMLSILFSFIVMKLNL), 90-110 (GIIPSLNVSAGLLGFFFVKTW), 135-155 (CVVASSGIAFSGGFGTYLFGM), 175-195 (LGWIIGFLFVVSFLGLFSVVP), 236-256 (VLGKFFSLSFFWSFFQWFFTG), 295-315 (IINISVLLGGILSWGIMWPLI), 340-360 (VFIAVAIILGDGLYNFCKVLS), 413-433 (IPTWFAVGGYITIAATSTAIL), 445-465 (ILVIYICAPVLAFCNAYGAGL), 477-497 (LAIFTIGAWAGSEHGGMLAGL), 531-551 (FVSQVIGTAMGCVVSPCVFWL), 593-613 (LVLCYAFFGVAILVNIVKDSL), and 631-651 (FFLGPYFAIDMCVGSLILFIW).

Belongs to the YSL (TC 2.A.67.2) family.

Its subcellular location is the membrane. In terms of biological role, may be involved in the transport of nicotianamine-chelated metals. This Arabidopsis thaliana (Mouse-ear cress) protein is Probable metal-nicotianamine transporter YSL5 (YSL5).